We begin with the raw amino-acid sequence, 121 residues long: Large ribosomal subunit protein uL24 (121 aa).

The protein belongs to the universal ribosomal protein uL24 family. Part of the 50S ribosomal subunit.

Its function is as follows. One of two assembly initiator proteins, it binds directly to the 5'-end of the 23S rRNA, where it nucleates assembly of the 50S subunit. Located at the polypeptide exit tunnel on the outside of the subunit. This is Large ribosomal subunit protein uL24 from Pyrococcus furiosus (strain ATCC 43587 / DSM 3638 / JCM 8422 / Vc1).